Here is a 466-residue protein sequence, read N- to C-terminus: Ribulose bisphosphate carboxylase large chain (466 aa).

Lys-5 is subject to N6,N6,N6-trimethyllysine. Substrate contacts are provided by Asn-114 and Thr-164. The Proton acceptor role is filled by Lys-166. Position 168 (Lys-168) interacts with substrate. Mg(2+)-binding residues include Lys-192, Asp-194, and Glu-195. N6-carboxylysine is present on Lys-192. The active-site Proton acceptor is the His-285. Arg-286, His-318, and Ser-370 together coordinate substrate.

It belongs to the RuBisCO large chain family. Type I subfamily. As to quaternary structure, heterohexadecamer of 8 large chains and 8 small chains; disulfide-linked. The disulfide link is formed within the large subunit homodimers. Requires Mg(2+) as cofactor. The disulfide bond which can form in the large chain dimeric partners within the hexadecamer appears to be associated with oxidative stress and protein turnover.

It localises to the plastid. The protein resides in the chloroplast. The enzyme catalyses 2 (2R)-3-phosphoglycerate + 2 H(+) = D-ribulose 1,5-bisphosphate + CO2 + H2O. The catalysed reaction is D-ribulose 1,5-bisphosphate + O2 = 2-phosphoglycolate + (2R)-3-phosphoglycerate + 2 H(+). Its function is as follows. RuBisCO catalyzes two reactions: the carboxylation of D-ribulose 1,5-bisphosphate, the primary event in carbon dioxide fixation, as well as the oxidative fragmentation of the pentose substrate in the photorespiration process. Both reactions occur simultaneously and in competition at the same active site. The polypeptide is Ribulose bisphosphate carboxylase large chain (Drosophyllum lusitanicum (Portuguese sundew)).